A 212-amino-acid chain; its full sequence is Interleukin-6 (212 aa).

Positions 1 to 29 (MNSFSTSAFGPVAFSLGLLLVLPAAFPAP) are cleaved as a signal peptide. A disulfide bond links Cys-72 and Cys-78. Residue Asn-73 is glycosylated (N-linked (GlcNAc...) asparagine). Phosphoserine; by FAM20C is present on Ser-81. A disulfide bridge links Cys-101 with Cys-111.

Belongs to the IL-6 superfamily. In terms of assembly, component of a hexamer of two molecules each of IL6, IL6R and IL6ST; first binds to IL6R to associate with the signaling subunit IL6ST. Interacts with IL6R (via the N-terminal ectodomain); this interaction may be affected by IL6R-binding with SORL1, hence decreasing IL6 cis signaling. Interacts with SORL1 (via the N-terminal ectodomain); this interaction leads to IL6 internalization and lysosomal degradation. May form a trimeric complex with the soluble SORL1 ectodomain and soluble IL6R receptor; this interaction might stabilize circulating IL6, hence promoting IL6 trans signaling. N- and O-glycosylated. In terms of tissue distribution, produced by skeletal muscle.

The protein localises to the secreted. Cytokine with a wide variety of biological functions in immunity, tissue regeneration, and metabolism. Binds to IL6R, then the complex associates to the signaling subunit IL6ST/gp130 to trigger the intracellular IL6-signaling pathway. The interaction with the membrane-bound IL6R and IL6ST stimulates 'classic signaling', whereas the binding of IL6 and soluble IL6R to IL6ST stimulates 'trans-signaling'. Alternatively, 'cluster signaling' occurs when membrane-bound IL6:IL6R complexes on transmitter cells activate IL6ST receptors on neighboring receiver cells. Functionally, IL6 is a potent inducer of the acute phase response. Rapid production of IL6 contributes to host defense during infection and tissue injury, but excessive IL6 synthesis is involved in disease pathology. In the innate immune response, is synthesized by myeloid cells, such as macrophages and dendritic cells, upon recognition of pathogens through toll-like receptors (TLRs) at the site of infection or tissue injury. In the adaptive immune response, is required for the differentiation of B cells into immunoglobulin-secreting cells. Plays a major role in the differentiation of CD4(+) T cell subsets. Essential factor for the development of T follicular helper (Tfh) cells that are required for the induction of germinal-center formation. Required to drive naive CD4(+) T cells to the Th17 lineage. Also required for proliferation of myeloma cells and the survival of plasmablast cells. Its function is as follows. Acts as an essential factor in bone homeostasis and on vessels directly or indirectly by induction of VEGF, resulting in increased angiogenesis activity and vascular permeability. Induces, through 'trans-signaling' and synergistically with IL1B and TNF, the production of VEGF. Involved in metabolic controls, is discharged into the bloodstream after muscle contraction increasing lipolysis and improving insulin resistance. 'Trans-signaling' in central nervous system also regulates energy and glucose homeostasis. Mediates, through GLP-1, crosstalk between insulin-sensitive tissues, intestinal L cells and pancreatic islets to adapt to changes in insulin demand. Also acts as a myokine. Plays a protective role during liver injury, being required for maintenance of tissue regeneration. Also has a pivotal role in iron metabolism by regulating HAMP/hepcidin expression upon inflammation or bacterial infection. Through activation of IL6ST-YAP-NOTCH pathway, induces inflammation-induced epithelial regeneration. This is Interleukin-6 from Homo sapiens (Human).